The sequence spans 213 residues: Large ribosomal subunit protein uL1 (213 aa).

This sequence belongs to the universal ribosomal protein uL1 family. As to quaternary structure, part of the 50S ribosomal subunit.

Binds directly to 23S rRNA. Probably involved in E site tRNA release. Its function is as follows. Protein L1 is also a translational repressor protein, it controls the translation of its operon by binding to its mRNA. This chain is Large ribosomal subunit protein uL1, found in Methanococcus maripaludis (strain C5 / ATCC BAA-1333).